Consider the following 177-residue polypeptide: Large ribosomal subunit protein uL5 (177 aa).

This sequence belongs to the universal ribosomal protein uL5 family. As to quaternary structure, part of the 50S ribosomal subunit; part of the 5S rRNA/L5/L18/L25 subcomplex. Contacts the 5S rRNA and the P site tRNA. Forms a bridge to the 30S subunit in the 70S ribosome.

Its function is as follows. This is one of the proteins that bind and probably mediate the attachment of the 5S RNA into the large ribosomal subunit, where it forms part of the central protuberance. In the 70S ribosome it contacts protein S13 of the 30S subunit (bridge B1b), connecting the 2 subunits; this bridge is implicated in subunit movement. Contacts the P site tRNA; the 5S rRNA and some of its associated proteins might help stabilize positioning of ribosome-bound tRNAs. The sequence is that of Large ribosomal subunit protein uL5 from Ehrlichia ruminantium (strain Welgevonden).